Reading from the N-terminus, the 1593-residue chain is DNA-directed RNA polymerase subunit beta' (1593 aa).

Residues Cys74, Cys76, Cys89, and Cys92 each contribute to the Zn(2+) site. Residues Asp648, Asp650, and Asp652 each contribute to the Mg(2+) site. Residues Cys1026, Cys1100, Cys1107, and Cys1110 each coordinate Zn(2+).

This sequence belongs to the RNA polymerase beta' chain family. As to quaternary structure, the RNAP catalytic core consists of 2 alpha, 1 beta, 1 beta' and 1 omega subunit. When a sigma factor is associated with the core the holoenzyme is formed, which can initiate transcription. The cofactor is Mg(2+). Requires Zn(2+) as cofactor.

The catalysed reaction is RNA(n) + a ribonucleoside 5'-triphosphate = RNA(n+1) + diphosphate. Its function is as follows. DNA-dependent RNA polymerase catalyzes the transcription of DNA into RNA using the four ribonucleoside triphosphates as substrates. The polypeptide is DNA-directed RNA polymerase subunit beta' (Endomicrobium trichonymphae).